A 194-amino-acid chain; its full sequence is 7-methyl-GTP pyrophosphatase (194 aa).

Catalysis depends on aspartate 70, which acts as the Proton acceptor.

The protein belongs to the Maf family. YceF subfamily. Requires a divalent metal cation as cofactor.

The protein localises to the cytoplasm. The catalysed reaction is N(7)-methyl-GTP + H2O = N(7)-methyl-GMP + diphosphate + H(+). Nucleoside triphosphate pyrophosphatase that hydrolyzes 7-methyl-GTP (m(7)GTP). May have a dual role in cell division arrest and in preventing the incorporation of modified nucleotides into cellular nucleic acids. This is 7-methyl-GTP pyrophosphatase from Vibrio vulnificus (strain CMCP6).